Consider the following 270-residue polypeptide: tRNA pseudouridine synthase A (270 aa).

D51 (nucleophile) is an active-site residue. Y109 contributes to the substrate binding site.

It belongs to the tRNA pseudouridine synthase TruA family. In terms of assembly, homodimer.

It carries out the reaction uridine(38/39/40) in tRNA = pseudouridine(38/39/40) in tRNA. In terms of biological role, formation of pseudouridine at positions 38, 39 and 40 in the anticodon stem and loop of transfer RNAs. The protein is tRNA pseudouridine synthase A of Burkholderia ambifaria (strain ATCC BAA-244 / DSM 16087 / CCUG 44356 / LMG 19182 / AMMD) (Burkholderia cepacia (strain AMMD)).